We begin with the raw amino-acid sequence, 736 residues long: Elongation factor 2 (736 aa).

The 244-residue stretch at 18-261 (EQVRNIGITA…MVVKFIPNPR (244 aa)) folds into the tr-type G domain. Residues 27-34 (AHVDHGKT), 93-97 (DTPGH), and 147-150 (NKVD) contribute to the GTP site. H602 is modified (diphthamide).

This sequence belongs to the TRAFAC class translation factor GTPase superfamily. Classic translation factor GTPase family. EF-G/EF-2 subfamily.

Its subcellular location is the cytoplasm. Functionally, catalyzes the GTP-dependent ribosomal translocation step during translation elongation. During this step, the ribosome changes from the pre-translocational (PRE) to the post-translocational (POST) state as the newly formed A-site-bound peptidyl-tRNA and P-site-bound deacylated tRNA move to the P and E sites, respectively. Catalyzes the coordinated movement of the two tRNA molecules, the mRNA and conformational changes in the ribosome. In Staphylothermus marinus (strain ATCC 43588 / DSM 3639 / JCM 9404 / F1), this protein is Elongation factor 2.